A 208-amino-acid polypeptide reads, in one-letter code: Superoxide dismutase [Mn] 2 (208 aa).

Mn(2+) contacts are provided by histidine 28, histidine 83, aspartate 165, and histidine 169.

Belongs to the iron/manganese superoxide dismutase family. In terms of assembly, homodimer. It depends on Mn(2+) as a cofactor.

The catalysed reaction is 2 superoxide + 2 H(+) = H2O2 + O2. In terms of biological role, destroys superoxide anion radicals which are normally produced within the cells and which are toxic to biological systems. The chain is Superoxide dismutase [Mn] 2 (sodA2) from Bacillus cereus (strain ATCC 14579 / DSM 31 / CCUG 7414 / JCM 2152 / NBRC 15305 / NCIMB 9373 / NCTC 2599 / NRRL B-3711).